Consider the following 215-residue polypeptide: Protein-L-isoaspartate O-methyltransferase (215 aa).

Serine 62 is an active-site residue.

The protein belongs to the methyltransferase superfamily. L-isoaspartyl/D-aspartyl protein methyltransferase family.

The protein localises to the cytoplasm. It catalyses the reaction [protein]-L-isoaspartate + S-adenosyl-L-methionine = [protein]-L-isoaspartate alpha-methyl ester + S-adenosyl-L-homocysteine. Its function is as follows. Catalyzes the methyl esterification of L-isoaspartyl residues in peptides and proteins that result from spontaneous decomposition of normal L-aspartyl and L-asparaginyl residues. It plays a role in the repair and/or degradation of damaged proteins. This is Protein-L-isoaspartate O-methyltransferase from Ruegeria pomeroyi (strain ATCC 700808 / DSM 15171 / DSS-3) (Silicibacter pomeroyi).